The following is a 260-amino-acid chain: Exosome complex component Rrp4 (260 aa).

The S1 motif domain maps to 59 to 128; it reads NDVVIGIVIV…NSMKVELALR (70 aa). Positions 136–194 constitute a KH domain; the sequence is KTGQIVEVEPVKVPRVIGHGGSMISMLKKETNCSIFVGQNGRIWIDGKDDDVELLSKAL.

It belongs to the RRP4 family. As to quaternary structure, component of the archaeal exosome complex. Forms a trimer of Rrp4 and/or Csl4 subunits. The trimer associates with a hexameric ring-like arrangement composed of 3 Rrp41-Rrp42 heterodimers.

It localises to the cytoplasm. In terms of biological role, non-catalytic component of the exosome, which is a complex involved in RNA degradation. Increases the RNA binding and the efficiency of RNA degradation. Confers strong poly(A) specificity to the exosome. This Methanosarcina barkeri (strain Fusaro / DSM 804) protein is Exosome complex component Rrp4.